Here is a 616-residue protein sequence, read N- to C-terminus: Chaperone protein HtpG (616 aa).

Residues 1-333 (MKKQFDTEVN…CQDLPLNVSR (333 aa)) are a; substrate-binding. Positions 334–542 (EILQQNKILS…SNDPTYQMQK (209 aa)) are b. The c stretch occupies residues 543-616 (IMLSMGQEVK…INEFLEKDLL (74 aa)).

It belongs to the heat shock protein 90 family. Homodimer.

The protein localises to the cytoplasm. Functionally, molecular chaperone. Has ATPase activity. This is Chaperone protein HtpG from Borreliella afzelii (strain PKo) (Borrelia afzelii).